The sequence spans 74 residues: ATP synthase subunit 9, mitochondrial (74 aa).

A run of 2 helical transmembrane segments spans residues 12 to 32 (LATI…AALI) and 50 to 70 (ILGF…AFLL).

This sequence belongs to the ATPase C chain family. In terms of assembly, F-type ATPases have 2 components, CF(1) - the catalytic core - and CF(0) - the membrane proton channel. CF(1) has five subunits: alpha(3), beta(3), gamma(1), delta(1), epsilon(1). CF(0) has three main subunits: a, b and c.

It is found in the mitochondrion membrane. In terms of biological role, mitochondrial membrane ATP synthase (F(1)F(0) ATP synthase or Complex V) produces ATP from ADP in the presence of a proton gradient across the membrane which is generated by electron transport complexes of the respiratory chain. F-type ATPases consist of two structural domains, F(1) - containing the extramembraneous catalytic core and F(0) - containing the membrane proton channel, linked together by a central stalk and a peripheral stalk. During catalysis, ATP synthesis in the catalytic domain of F(1) is coupled via a rotary mechanism of the central stalk subunits to proton translocation. Part of the complex F(0) domain. A homomeric c-ring of probably 10 subunits is part of the complex rotary element. The protein is ATP synthase subunit 9, mitochondrial of Rhizopus oryzae (Mucormycosis agent).